Consider the following 155-residue polypeptide: Cell division protein SepF (155 aa).

Acidic residues predominate over residues 16-35 (TEDEEEDVETVEESEDVEEE). The disordered stretch occupies residues 16-44 (TEDEEEDVETVEESEDVEEEESKKPQFIQ).

This sequence belongs to the SepF family. In terms of assembly, homodimer. Interacts with FtsZ.

The protein resides in the cytoplasm. Functionally, cell division protein that is part of the divisome complex and is recruited early to the Z-ring. Probably stimulates Z-ring formation, perhaps through the cross-linking of FtsZ protofilaments. Its function overlaps with FtsA. In Acetivibrio thermocellus (strain ATCC 27405 / DSM 1237 / JCM 9322 / NBRC 103400 / NCIMB 10682 / NRRL B-4536 / VPI 7372) (Clostridium thermocellum), this protein is Cell division protein SepF.